The following is a 565-amino-acid chain: NAD-dependent malic enzyme (565 aa).

Residue Y104 is the Proton donor of the active site. Residue R157 coordinates NAD(+). K175 (proton acceptor) is an active-site residue. A divalent metal cation-binding residues include E246, D247, and D270. The NAD(+) site is built by D270 and N418.

The protein belongs to the malic enzymes family. In terms of assembly, homotetramer. Mg(2+) serves as cofactor. Requires Mn(2+) as cofactor.

It carries out the reaction (S)-malate + NAD(+) = pyruvate + CO2 + NADH. It catalyses the reaction oxaloacetate + H(+) = pyruvate + CO2. This chain is NAD-dependent malic enzyme, found in Salmonella dublin (strain CT_02021853).